We begin with the raw amino-acid sequence, 272 residues long: Short-chain dehydrogenase/reductase iacC (272 aa).

NADP(+) is bound by residues Ile-13, Asp-59, and Asn-88. Active-site proton donor residues include Ser-150 and Tyr-169. 3 residues coordinate NADP(+): Tyr-169, Lys-173, and Val-202. Residue Lys-173 is the Lowers pKa of active site Tyr of the active site.

This sequence belongs to the short-chain dehydrogenases/reductases (SDR) family.

It functions in the pathway secondary metabolite biosynthesis. Its function is as follows. Short-chain dehydrogenase/reductase; part of the gene cluster that mediates the biosynthesis of iso-A82775C, a enylepoxycyclohexane and biosynthetic precursor of the chloropestolide anticancer natural products. Within the cluster, the prenyltransferase iacE prenylates siccayne to generate pestalodiol E, using dimethylallyl diphosphate (DMAPP) as cosubstrate. The probable oxidoreductase iacF is then involved in the epoxidation of pestalodiol F to pestalodiol F, which is further converted to pestalofone A by the short-chain dehydrogenase/reductase iacG. Iso-A82775C is subsequently generated from pestalofone A by the short-chain dehydrogenase/reductase iacC. Iso-A82775C is further condensed with maldoxin via a Diels-Alder reaction to produce the anticancer natural products chloropestolides A to E. The sequence is that of Short-chain dehydrogenase/reductase iacC from Pestalotiopsis fici (strain W106-1 / CGMCC3.15140).